We begin with the raw amino-acid sequence, 68 residues long: ATP synthase subunit c (68 aa).

2 consecutive transmembrane segments (helical) span residues 4–24 (IAAA…NGLI) and 45–65 (IMFI…VIAF).

It belongs to the ATPase C chain family. In terms of assembly, F-type ATPases have 2 components, F(1) - the catalytic core - and F(0) - the membrane proton channel. F(1) has five subunits: alpha(3), beta(3), gamma(1), delta(1), epsilon(1). F(0) has three main subunits: a(1), b(2) and c(10-14). The alpha and beta chains form an alternating ring which encloses part of the gamma chain. F(1) is attached to F(0) by a central stalk formed by the gamma and epsilon chains, while a peripheral stalk is formed by the delta and b chains.

It localises to the cell membrane. In terms of biological role, f(1)F(0) ATP synthase produces ATP from ADP in the presence of a proton or sodium gradient. F-type ATPases consist of two structural domains, F(1) containing the extramembraneous catalytic core and F(0) containing the membrane proton channel, linked together by a central stalk and a peripheral stalk. During catalysis, ATP synthesis in the catalytic domain of F(1) is coupled via a rotary mechanism of the central stalk subunits to proton translocation. Functionally, key component of the F(0) channel; it plays a direct role in translocation across the membrane. A homomeric c-ring of between 10-14 subunits forms the central stalk rotor element with the F(1) delta and epsilon subunits. The polypeptide is ATP synthase subunit c (Staphylococcus saprophyticus subsp. saprophyticus (strain ATCC 15305 / DSM 20229 / NCIMB 8711 / NCTC 7292 / S-41)).